The primary structure comprises 2021 residues: HEAT repeat-containing protein 5A (2021 aa).

HEAT repeat units follow at residues 795 to 836 and 1059 to 1096; these read SQRP…HLAS and VNLSSLVPTLCVHLYSPHLPLRRAVLACLRQLAQREAA. 2 disordered regions span residues 1503–1528 and 1989–2012; these read EGNGHLSRPVTPTSMGQERGSQLPAD and RGNQESLKPKAPSRGTMGGGHGSP. A compositionally biased stretch (polar residues) spans 1512 to 1522; it reads VTPTSMGQERG.

This sequence belongs to the HEATR5 family.

The protein is HEAT repeat-containing protein 5A (heatr5a) of Xenopus tropicalis (Western clawed frog).